The chain runs to 356 residues: Protein RecA (356 aa).

G67–T74 lines the ATP pocket.

This sequence belongs to the RecA family.

It is found in the cytoplasm. Can catalyze the hydrolysis of ATP in the presence of single-stranded DNA, the ATP-dependent uptake of single-stranded DNA by duplex DNA, and the ATP-dependent hybridization of homologous single-stranded DNAs. It interacts with LexA causing its activation and leading to its autocatalytic cleavage. The sequence is that of Protein RecA from Yersinia pestis bv. Antiqua (strain Angola).